Here is a 298-residue protein sequence, read N- to C-terminus: Urease accessory protein UreD (298 aa).

Belongs to the UreD family. As to quaternary structure, ureD, UreF and UreG form a complex that acts as a GTP-hydrolysis-dependent molecular chaperone, activating the urease apoprotein by helping to assemble the nickel containing metallocenter of UreC. The UreE protein probably delivers the nickel.

Its subcellular location is the cytoplasm. Functionally, required for maturation of urease via the functional incorporation of the urease nickel metallocenter. In Marinobacter nauticus (strain ATCC 700491 / DSM 11845 / VT8) (Marinobacter aquaeolei), this protein is Urease accessory protein UreD.